The following is a 283-amino-acid chain: Aldo-keto reductase MSMEG_2407/MSMEI_2346 (283 aa).

The Proton donor role is filled by Tyr58. 11 residues coordinate NADPH: Gly196, Leu198, Val200, Ile236, Arg238, Ser239, Ala240, Arg244, Ser247, Asn248, and Arg274.

This sequence belongs to the aldo/keto reductase family. Monomer.

Its activity is regulated as follows. Inhibited by the antituberculosis drug isoniazid (INH). Catalyzes the NADPH-dependent reduction of dicarbonyls. Exhibits narrow substrate specificity, with preferential activity against the dicarbonyl substrates phenylglyoxal and methylglyoxal. Exhibits weak activity with ethyl-2-methyl acetoacetate. Cannot use NADH. May play an important role in the detoxification of methylglyoxal. The chain is Aldo-keto reductase MSMEG_2407/MSMEI_2346 from Mycolicibacterium smegmatis (strain ATCC 700084 / mc(2)155) (Mycobacterium smegmatis).